The primary structure comprises 473 residues: Photosystem II CP43 reaction center protein (473 aa).

Positions 1-14 (MKTLYSLRRFYPVE) are excised as a propeptide. T15 is subject to N-acetylthreonine. T15 carries the post-translational modification Phosphothreonine. 5 helical membrane-spanning segments follow: residues 69-93 (LFEV…PHLA), 134-155 (LLGP…KDRN), 178-200 (KALY…RKIT), 255-275 (KPFA…LSYS), and 291-312 (WFNN…ASQA). Residue E367 coordinates [CaMn4O5] cluster. Residues 447–471 (RARAAAAGFEKGIDRDFEPVLSMTP) form a helical membrane-spanning segment.

This sequence belongs to the PsbB/PsbC family. PsbC subfamily. As to quaternary structure, PSII is composed of 1 copy each of membrane proteins PsbA, PsbB, PsbC, PsbD, PsbE, PsbF, PsbH, PsbI, PsbJ, PsbK, PsbL, PsbM, PsbT, PsbX, PsbY, PsbZ, Psb30/Ycf12, at least 3 peripheral proteins of the oxygen-evolving complex and a large number of cofactors. It forms dimeric complexes. Binds multiple chlorophylls and provides some of the ligands for the Ca-4Mn-5O cluster of the oxygen-evolving complex. It may also provide a ligand for a Cl- that is required for oxygen evolution. PSII binds additional chlorophylls, carotenoids and specific lipids. is required as a cofactor.

It is found in the plastid. The protein localises to the chloroplast thylakoid membrane. Functionally, one of the components of the core complex of photosystem II (PSII). It binds chlorophyll and helps catalyze the primary light-induced photochemical processes of PSII. PSII is a light-driven water:plastoquinone oxidoreductase, using light energy to abstract electrons from H(2)O, generating O(2) and a proton gradient subsequently used for ATP formation. The protein is Photosystem II CP43 reaction center protein of Gossypium hirsutum (Upland cotton).